A 225-amino-acid chain; its full sequence is Small ribosomal subunit protein uS3 (225 aa).

A KH type-2 domain is found at Ile38 to Lys106.

The protein belongs to the universal ribosomal protein uS3 family. In terms of assembly, part of the 30S ribosomal subunit. Forms a tight complex with proteins S10 and S14.

Its function is as follows. Binds the lower part of the 30S subunit head. Binds mRNA in the 70S ribosome, positioning it for translation. In Leptospira borgpetersenii serovar Hardjo-bovis (strain JB197), this protein is Small ribosomal subunit protein uS3.